We begin with the raw amino-acid sequence, 333 residues long: FAD-dependent monooxygenase pytG (333 aa).

A helical transmembrane segment spans residues 6-26 (LPNVSVAIIGAGIGGLTLGAF). FAD is bound by residues Glu38 and Arg109. N-linked (GlcNAc...) asparagine glycosylation is present at Asn303.

Belongs to the paxM FAD-dependent monooxygenase family. The cofactor is FAD.

It is found in the membrane. It functions in the pathway secondary metabolite biosynthesis. FAD-dependent monooxygenase; part of the gene cluster that mediates the biosynthesis of pyranterreones, a family of antioxidative compounds. The first step of pyranonigrins biosynthesis is performed by the hybrid PKS-NRPS synthetase pytA that condenses 4 malonyl-CoA units ato the acetyl starter unit by the modular PKS of pytA. The acyl chain is then connected to an L-serine through the amide bond by the modular NRPS of pytA. A tetramic acid is formed and released from the PKS-NRPS pytA to give pyranterreone 5 with the help of the thioesterase pytI. Pyranterreone 5 could be methylated by pytC to afford pyranterreone 6. Both pyranterreones 5 and 6 are subsequently oxidized by the FAD-linked oxidoreductase pytB and the cytochrome P450 monooxygenase pytD to form the fused gamma-pyrone core, resulting in pyranterreones 7 and 11, respectively. The hydroxy group at C-8 of pyranterreones 7 and 11 are dehydrated by the aspartyl protease pytH to form a delta-7 double bond to give pyranterreones 3 and 1, 2 accordingly. The exo-methylene of pyranterreone 3 could be reduced into a pendant methyl by reductase pytE to provide pyranterreone 4, also known as cordylactam. Pyranterreone 4 can be reconverted to pyranterreone 3 through pytB-catalyzed dehydrogenation or further oxidized to pyranterreones 9 and 10. The chain is FAD-dependent monooxygenase pytG from Aspergillus terreus (strain NIH 2624 / FGSC A1156).